A 280-amino-acid polypeptide reads, in one-letter code: Tryptophan 2,3-dioxygenase (280 aa).

Residues F49 to H53, Y111, and R115 contribute to the substrate site. H238 provides a ligand contact to heme. Position 252 (T252) interacts with substrate.

This sequence belongs to the tryptophan 2,3-dioxygenase family. As to quaternary structure, homotetramer. Heme serves as cofactor.

It catalyses the reaction L-tryptophan + O2 = N-formyl-L-kynurenine. It functions in the pathway amino-acid degradation; L-tryptophan degradation via kynurenine pathway; L-kynurenine from L-tryptophan: step 1/2. Its function is as follows. Heme-dependent dioxygenase that catalyzes the oxidative cleavage of the L-tryptophan (L-Trp) pyrrole ring and converts L-tryptophan to N-formyl-L-kynurenine. Catalyzes the oxidative cleavage of the indole moiety. This chain is Tryptophan 2,3-dioxygenase, found in Geobacillus thermodenitrificans (strain NG80-2).